A 122-amino-acid chain; its full sequence is Large ribosomal subunit protein uL14 (122 aa).

The protein belongs to the universal ribosomal protein uL14 family. As to quaternary structure, part of the 50S ribosomal subunit. Forms a cluster with proteins L3 and L19. In the 70S ribosome, L14 and L19 interact and together make contacts with the 16S rRNA in bridges B5 and B8.

Binds to 23S rRNA. Forms part of two intersubunit bridges in the 70S ribosome. The sequence is that of Large ribosomal subunit protein uL14 from Syntrophomonas wolfei subsp. wolfei (strain DSM 2245B / Goettingen).